A 461-amino-acid polypeptide reads, in one-letter code: Bifunctional protein GlmU (461 aa).

The tract at residues 1 to 235 is pyrophosphorylase; the sequence is MTDTRKQRAA…EDDLIGCDSK (235 aa). UDP-N-acetyl-alpha-D-glucosamine is bound by residues 13 to 16, lysine 27, glutamine 80, 85 to 86, 108 to 110, glycine 146, glutamate 161, and asparagine 176; these read LAAG, GT, and YGD. A Mg(2+)-binding site is contributed by aspartate 110. Positions 236 to 256 are linker; sequence ADLAEAEAIFQQKRRRALMEA. The tract at residues 257–461 is N-acetyltransferase; sequence GVTMVAPETV…ARTTDQNKKG (205 aa). UDP-N-acetyl-alpha-D-glucosamine is bound by residues arginine 322 and lysine 340. The Proton acceptor role is filled by histidine 352. The UDP-N-acetyl-alpha-D-glucosamine site is built by tyrosine 355 and asparagine 366. Acetyl-CoA contacts are provided by residues alanine 369, 375-376, serine 394, serine 412, and arginine 429; that span reads NY.

The protein in the N-terminal section; belongs to the N-acetylglucosamine-1-phosphate uridyltransferase family. It in the C-terminal section; belongs to the transferase hexapeptide repeat family. Homotrimer. Mg(2+) is required as a cofactor.

It localises to the cytoplasm. The enzyme catalyses alpha-D-glucosamine 1-phosphate + acetyl-CoA = N-acetyl-alpha-D-glucosamine 1-phosphate + CoA + H(+). It catalyses the reaction N-acetyl-alpha-D-glucosamine 1-phosphate + UTP + H(+) = UDP-N-acetyl-alpha-D-glucosamine + diphosphate. Its pathway is nucleotide-sugar biosynthesis; UDP-N-acetyl-alpha-D-glucosamine biosynthesis; N-acetyl-alpha-D-glucosamine 1-phosphate from alpha-D-glucosamine 6-phosphate (route II): step 2/2. The protein operates within nucleotide-sugar biosynthesis; UDP-N-acetyl-alpha-D-glucosamine biosynthesis; UDP-N-acetyl-alpha-D-glucosamine from N-acetyl-alpha-D-glucosamine 1-phosphate: step 1/1. It participates in bacterial outer membrane biogenesis; LPS lipid A biosynthesis. In terms of biological role, catalyzes the last two sequential reactions in the de novo biosynthetic pathway for UDP-N-acetylglucosamine (UDP-GlcNAc). The C-terminal domain catalyzes the transfer of acetyl group from acetyl coenzyme A to glucosamine-1-phosphate (GlcN-1-P) to produce N-acetylglucosamine-1-phosphate (GlcNAc-1-P), which is converted into UDP-GlcNAc by the transfer of uridine 5-monophosphate (from uridine 5-triphosphate), a reaction catalyzed by the N-terminal domain. This Hyphomonas neptunium (strain ATCC 15444) protein is Bifunctional protein GlmU.